Reading from the N-terminus, the 373-residue chain is Homoserine O-acetyltransferase (373 aa).

Residues 46-355 form the AB hydrolase-1 domain; that stretch reads NAILICHPLT…NPNGHDSFLL (310 aa). Serine 151 functions as the Nucleophile in the catalytic mechanism. Arginine 221 lines the substrate pocket. Catalysis depends on residues aspartate 317 and histidine 350. Substrate is bound at residue aspartate 351.

This sequence belongs to the AB hydrolase superfamily. MetX family. As to quaternary structure, homodimer.

The protein resides in the cytoplasm. It carries out the reaction L-homoserine + acetyl-CoA = O-acetyl-L-homoserine + CoA. The protein operates within amino-acid biosynthesis; L-methionine biosynthesis via de novo pathway; O-acetyl-L-homoserine from L-homoserine: step 1/1. Functionally, transfers an acetyl group from acetyl-CoA to L-homoserine, forming acetyl-L-homoserine. This chain is Homoserine O-acetyltransferase, found in Zymomonas mobilis subsp. mobilis (strain ATCC 31821 / ZM4 / CP4).